A 425-amino-acid polypeptide reads, in one-letter code: Inositol hexakisphosphate kinase 2 (425 aa).

Residues 206 to 208 and D219 each bind ATP; that span reads ENL. Substrate contacts are provided by residues 215-223, K221, and 235-242; these read PCVLDLKMG and KAANQIRK. Position 382 (D382) interacts with ATP. H385 is a binding site for substrate.

The protein belongs to the inositol phosphokinase (IPK) family. As to expression, highly expressed in small intestine.

The protein localises to the nucleus. The catalysed reaction is 1D-myo-inositol hexakisphosphate + ATP = 5-diphospho-1D-myo-inositol 1,2,3,4,6-pentakisphosphate + ADP. Its pathway is phospholipid metabolism; phosphatidylinositol metabolism. Functionally, converts inositol hexakisphosphate (InsP6) to diphosphoinositol pentakisphosphate (InsP7/PP-InsP5). The polypeptide is Inositol hexakisphosphate kinase 2 (Ip6k2) (Rattus norvegicus (Rat)).